Reading from the N-terminus, the 320-residue chain is TPR repeat-containing protein MJ0263 (320 aa).

TPR repeat units lie at residues 12–45 (ILKDVVNALECADKGNFDKALEYLEKAQKVDKDN), 46–79 (PLVLYVKGIVLKLKGDMEKAEKYFECLENIEGTS), 80–113 (LLSLGNLICLTFVKGEYERTLKYIEKLSRLSKPC), 114–147 (YLSPFHKALIYIEFGEFEKALEALDEFLKIYPNL), 148–181 (TSILRQKASILEILGKLDEALDCVNKILSIKKDD), 182–215 (AHAWYLKGRILKKLGNIKEALDALKMAINLNENL), 216–249 (VHVYKDIAYLELANNNYEEALNYITKYLEKFPND), 250–283 (VEAKFYLALIYENLNKVDDALKIYDKIISNKNVK), and 289–320 (KSSILNKARILEKLGKIEEAVETYNKAFDNNI).

This is TPR repeat-containing protein MJ0263 from Methanocaldococcus jannaschii (strain ATCC 43067 / DSM 2661 / JAL-1 / JCM 10045 / NBRC 100440) (Methanococcus jannaschii).